The primary structure comprises 212 residues: NADH-quinone oxidoreductase subunit I (212 aa).

4Fe-4S ferredoxin-type domains follow at residues R76 to D105 and L115 to L144. [4Fe-4S] cluster-binding residues include C85, C88, C91, C95, C124, C127, C130, and C134.

This sequence belongs to the complex I 23 kDa subunit family. In terms of assembly, NDH-1 is composed of 14 different subunits. Subunits NuoA, H, J, K, L, M, N constitute the membrane sector of the complex. The cofactor is [4Fe-4S] cluster.

It localises to the cell inner membrane. The enzyme catalyses a quinone + NADH + 5 H(+)(in) = a quinol + NAD(+) + 4 H(+)(out). NDH-1 shuttles electrons from NADH, via FMN and iron-sulfur (Fe-S) centers, to quinones in the respiratory chain. The immediate electron acceptor for the enzyme in this species is believed to be ubiquinone. Couples the redox reaction to proton translocation (for every two electrons transferred, four hydrogen ions are translocated across the cytoplasmic membrane), and thus conserves the redox energy in a proton gradient. This Helicobacter hepaticus (strain ATCC 51449 / 3B1) protein is NADH-quinone oxidoreductase subunit I.